The sequence spans 1062 residues: Protein P1-P2 (1062 aa).

A signal peptide spans 1 to 20 (MNRFTAYAALFFIFSLCSTA). Helical transmembrane passes span 121–141 (AASVTLWAIISIWFGLYWTLA), 144–164 (ITLFLWTFSIEALCLILLGCI), and 172–192 (ALSLSEHLPVFLFMSPLKIIW). The 193-residue stretch at 207–399 (VEGYKGFSVP…GITSPNYVFE (193 aa)) folds into the Peptidase S39 domain. Catalysis depends on for protease activity residues His-255, Asp-286, and Ser-354. A disordered region spans residues 456-557 (TNAPAEKTAQ…AEAQTKQTRK (102 aa)). Positions 463-484 (TAQTNSAEKTAPSTSAEKTAPT) are enriched in polar residues. The segment covering 497 to 511 (QNKRQLRHPRRRYKR) has biased composition (basic residues). Over residues 541–553 (QGVSESPAEAQTK) the composition is skewed to polar residues. In terms of domain architecture, RdRp catalytic spans 859 to 974 (EHTRPTDCSG…APNSDLEEYK (116 aa)).

Specific enzymatic cleavages in vivo yield mature proteins. The protease probably cleaves itself and releases the RdRp (Potential). Cleavages have been shown in the P1 protein, but since the N-terminus containing the serine protease is shared between P1 and P1-P2, cleavages should also occur within the P1-P2 protein.

The protein resides in the membrane. The enzyme catalyses RNA(n) + a ribonucleoside 5'-triphosphate = RNA(n+1) + diphosphate. Functionally, precursor from which the RNA-dependent RNA polymerase (RdRp) is probably released. RNA-dependent RNA polymerase plays an essential role in virus replication (Potential). The sequence is that of Protein P1-P2 from Solanum tuberosum (Potato).